Reading from the N-terminus, the 159-residue chain is Transcription elongation factor GreA (159 aa).

A coiled-coil region spans residues S44–I75.

It belongs to the GreA/GreB family.

Functionally, necessary for efficient RNA polymerase transcription elongation past template-encoded arresting sites. The arresting sites in DNA have the property of trapping a certain fraction of elongating RNA polymerases that pass through, resulting in locked ternary complexes. Cleavage of the nascent transcript by cleavage factors such as GreA or GreB allows the resumption of elongation from the new 3'terminus. GreA releases sequences of 2 to 3 nucleotides. The protein is Transcription elongation factor GreA of Chlorobium limicola (strain DSM 245 / NBRC 103803 / 6330).